A 129-amino-acid polypeptide reads, in one-letter code: Follitropin subunit beta (129 aa).

The first 18 residues, 1 to 18 (MKTVQFCFLFCCWKAICC), serve as a signal peptide directing secretion. 6 disulfides stabilise this stretch: Cys21–Cys69, Cys35–Cys84, Cys38–Cys122, Cys46–Cys100, Cys50–Cys102, and Cys105–Cys112. Residues Asn25 and Asn42 are each glycosylated (N-linked (GlcNAc...) asparagine).

This sequence belongs to the glycoprotein hormones subunit beta family. Heterodimer. The active follitropin is a heterodimer composed of an alpha chain/CGA shared with other hormones and a unique beta chain/FSHB shown here.

It localises to the secreted. Together with the alpha chain CGA constitutes follitropin, the follicle-stimulating hormone, and provides its biological specificity to the hormone heterodimer. Binds FSHR, a G protein-coupled receptor, on target cells to activate downstream signaling pathways. Follitropin is involved in follicle development and spermatogenesis in reproductive organs. The polypeptide is Follitropin subunit beta (FSHB) (Macaca fascicularis (Crab-eating macaque)).